The primary structure comprises 400 residues: MKLKTLSVGEVNNYVKKLVENDFILKNLNVKGEISNLKFHSSGHIYFSLKDENSKVNCIMFKNNAVNLDFRLEEGMKVEIKARLGVYHKEGTYQLYCENIKKAGIGELFEEFHKLKKELSEEGIFDEKYKRALPKFPKRIGIITARTGAAVRDIINVIQRRNKSLDIILYPAKVQGENAADSIIEGIRYFNNEKSVDVIILGRGGGSIEELWAFNNRDLAYEIFNSRIPTVSAVGHEVDFTISDFVSDMRAPTPSAAGELVSPSLQEMINDLLNKKEFLHRAVDRRFLNAKRDVDLLHKGLKGNNPTHIIEKRIKEVNTLEEKLNFLGKRKIDKAKDELIALNSILQTLNPLNTLGRGYSVIMDKEDKVINKVSELKKNDMVKVIMKDGSVNIDIKIINE.

This sequence belongs to the XseA family. Heterooligomer composed of large and small subunits.

The protein resides in the cytoplasm. It catalyses the reaction Exonucleolytic cleavage in either 5'- to 3'- or 3'- to 5'-direction to yield nucleoside 5'-phosphates.. In terms of biological role, bidirectionally degrades single-stranded DNA into large acid-insoluble oligonucleotides, which are then degraded further into small acid-soluble oligonucleotides. In Clostridium perfringens (strain 13 / Type A), this protein is Exodeoxyribonuclease 7 large subunit.